The sequence spans 310 residues: L-lactate dehydrogenase (310 aa).

Residues V17, D38, K43, Y69, and 83 to 84 (GA) contribute to the NAD(+) site. Residues Q86 and R92 each coordinate substrate. Residues S105, 122 to 124 (ATN), and S147 contribute to the NAD(+) site. 124 to 127 (NPVD) is a binding site for substrate. 152–155 (DTAR) contributes to the substrate binding site. Beta-D-fructose 1,6-bisphosphate-binding residues include R157 and H172. H179 (proton acceptor) is an active-site residue. Position 218 is a phosphotyrosine (Y218). Residue T227 coordinates substrate.

Belongs to the LDH/MDH superfamily. LDH family. Homotetramer.

The protein resides in the cytoplasm. The enzyme catalyses (S)-lactate + NAD(+) = pyruvate + NADH + H(+). It functions in the pathway fermentation; pyruvate fermentation to lactate; (S)-lactate from pyruvate: step 1/1. With respect to regulation, allosterically activated by fructose 1,6-bisphosphate (FBP). Catalyzes the conversion of lactate to pyruvate. The chain is L-lactate dehydrogenase from Halalkalibacterium halodurans (strain ATCC BAA-125 / DSM 18197 / FERM 7344 / JCM 9153 / C-125) (Bacillus halodurans).